Consider the following 396-residue polypeptide: 1-deoxy-D-xylulose 5-phosphate reductoisomerase (396 aa).

Residues threonine 13, glycine 14, serine 15, isoleucine 16, and asparagine 127 each coordinate NADPH. Lysine 128 lines the 1-deoxy-D-xylulose 5-phosphate pocket. NADPH is bound at residue glutamate 129. Aspartate 153 contributes to the Mn(2+) binding site. 1-deoxy-D-xylulose 5-phosphate-binding residues include serine 154, glutamate 155, serine 184, and histidine 207. Glutamate 155 lines the Mn(2+) pocket. NADPH is bound at residue glycine 213. The 1-deoxy-D-xylulose 5-phosphate site is built by serine 220, asparagine 225, lysine 226, and glutamate 229. A Mn(2+)-binding site is contributed by glutamate 229.

This sequence belongs to the DXR family. It depends on Mg(2+) as a cofactor. Requires Mn(2+) as cofactor.

It catalyses the reaction 2-C-methyl-D-erythritol 4-phosphate + NADP(+) = 1-deoxy-D-xylulose 5-phosphate + NADPH + H(+). Its pathway is isoprenoid biosynthesis; isopentenyl diphosphate biosynthesis via DXP pathway; isopentenyl diphosphate from 1-deoxy-D-xylulose 5-phosphate: step 1/6. In terms of biological role, catalyzes the NADPH-dependent rearrangement and reduction of 1-deoxy-D-xylulose-5-phosphate (DXP) to 2-C-methyl-D-erythritol 4-phosphate (MEP). This is 1-deoxy-D-xylulose 5-phosphate reductoisomerase from Pseudomonas syringae pv. syringae (strain B728a).